A 55-amino-acid chain; its full sequence is Sec-independent protein translocase protein TatA (55 aa).

The helical transmembrane segment at 1-21 (MFGELGVPEVLFILGIALLIF) threads the bilayer.

This sequence belongs to the TatA/E family. As to quaternary structure, forms a complex with TatC.

It is found in the cell inner membrane. Part of the twin-arginine translocation (Tat) system that transports large folded proteins containing a characteristic twin-arginine motif in their signal peptide across membranes. TatA could form the protein-conducting channel of the Tat system. The protein is Sec-independent protein translocase protein TatA of Koribacter versatilis (strain Ellin345).